Here is a 160-residue protein sequence, read N- to C-terminus: Arginine repressor (160 aa).

Belongs to the ArgR family.

It is found in the cytoplasm. It participates in amino-acid biosynthesis; L-arginine biosynthesis [regulation]. Regulates arginine biosynthesis genes. The chain is Arginine repressor from Anaeromyxobacter dehalogenans (strain 2CP-1 / ATCC BAA-258).